The chain runs to 156 residues: Histidine-containing phosphotransfer protein 2 (156 aa).

N-acetylmethionine is present on M1. Residues 40–147 form the HPt domain; the sequence is SPDFVSEVLS…NLEKQIIQAG (108 aa). H82 is modified (phosphohistidine).

As to quaternary structure, interacts with the B-type response regulators ARR1, ARR2 and ARR10. Binds to AHK1, AHK2, AHK3, AHK4, AHK5, ETR1 and CKI1. Two-component system major event consists of a His-to-Asp phosphorelay between a sensor histidine kinase (HK) and a response regulator (RR). In plants, the His-to-Asp phosphorelay involves an additional intermediate named Histidine-containing phosphotransfer protein (HPt). This multistep phosphorelay consists of a His-Asp-His-Asp sequential transfer of a phosphate group between first a His and an Asp of the HK protein, followed by the transfer to a conserved His of the HPt protein and finally the transfer to an Asp in the receiver domain of the RR protein. As to expression, strongly expressed in flowers and roots. Detected also in leaves, siliques and stems.

Its subcellular location is the cytoplasm. The protein localises to the cytosol. It localises to the nucleus. Its function is as follows. Functions as a two-component phosphorelay mediators between cytokinin sensor histidine kinases and response regulator (B-type ARRs). Plays an important role in propagating cytokinin signal transduction through the multistep His-to-Asp phosphorelay. The chain is Histidine-containing phosphotransfer protein 2 (AHP2) from Arabidopsis thaliana (Mouse-ear cress).